The primary structure comprises 461 residues: Photosystem II CP43 reaction center protein (461 aa).

Positions 1-2 (ME) are excised as a propeptide. The residue at position 3 (Thr3) is an N-acetylthreonine. Phosphothreonine is present on Thr3. The next 5 helical transmembrane spans lie at 57–81 (LFEV…PHIA), 122–143 (LIGP…KDKN), 166–188 (KAMY…RIIS), 243–263 (KPWG…LSYS), and 279–300 (WFNN…ASQA). Residue Glu355 participates in [CaMn4O5] cluster binding. A helical membrane pass occupies residues 435–459 (RARAAAAGFEKGIDRDTEPVLSMKP).

It belongs to the PsbB/PsbC family. PsbC subfamily. As to quaternary structure, PSII is composed of 1 copy each of membrane proteins PsbA, PsbB, PsbC, PsbD, PsbE, PsbF, PsbH, PsbI, PsbJ, PsbK, PsbL, PsbM, PsbT, PsbX, PsbY, PsbZ, Psb30/Ycf12, at least 3 peripheral proteins of the oxygen-evolving complex and a large number of cofactors. It forms dimeric complexes. Requires Binds multiple chlorophylls and provides some of the ligands for the Ca-4Mn-5O cluster of the oxygen-evolving complex. It may also provide a ligand for a Cl- that is required for oxygen evolution. PSII binds additional chlorophylls, carotenoids and specific lipids. as cofactor.

The protein resides in the plastid. The protein localises to the chloroplast thylakoid membrane. Functionally, one of the components of the core complex of photosystem II (PSII). It binds chlorophyll and helps catalyze the primary light-induced photochemical processes of PSII. PSII is a light-driven water:plastoquinone oxidoreductase, using light energy to abstract electrons from H(2)O, generating O(2) and a proton gradient subsequently used for ATP formation. This chain is Photosystem II CP43 reaction center protein, found in Oltmannsiellopsis viridis (Marine flagellate).